Reading from the N-terminus, the 627-residue chain is Mitochondrial Rho GTPase 1 (627 aa).

Positions 1 to 169 (MATVRICVCG…FFLCQKAVTH (169 aa)) constitute a Miro 1 domain. Over 1 to 599 (MATVRICVCG…PRSNEEGPDR (599 aa)) the chain is Cytoplasmic. Residues 10–17 (GDESTGKS), 58–62 (DTSAR), and 114–117 (NKSD) contribute to the GTP site. EF-hand domains are found at residues 185–220 (LCIN…CFDK) and 305–340 (AGYR…APGL). Residues aspartate 198, aspartate 200, aspartate 202, tyrosine 204, glutamate 209, aspartate 318, aspartate 320, aspartate 322, and glutamate 329 each contribute to the Ca(2+) site. Positions 420–584 (RNVVLCYVLG…FVAYADAATT (165 aa)) constitute a Miro 2 domain. GTP is bound by residues 429 to 436 (GASGAGKS), 465 to 469 (ELPGG), and 534 to 537 (LKAD). Residues 600–620 (TSLYIALGATACAGVAALTIW) traverse the membrane as a helical; Anchor for type IV membrane protein segment. Residues 621-627 (RRATNAL) are Mitochondrial intermembrane-facing.

This sequence belongs to the mitochondrial Rho GTPase family.

Its subcellular location is the mitochondrion outer membrane. In terms of biological role, mitochondrial GTPase involved in mitochondrial trafficking. Probably involved in control of anterograde transport of mitochondria and their subcellular distribution. The protein is Mitochondrial Rho GTPase 1 (GEM1) of Gibberella zeae (strain ATCC MYA-4620 / CBS 123657 / FGSC 9075 / NRRL 31084 / PH-1) (Wheat head blight fungus).